The sequence spans 224 residues: tRNA (guanine-N(7)-)-methyltransferase (224 aa).

S-adenosyl-L-methionine-binding residues include E54, E79, and D129. The active site involves D129. The substrate site is built by K133 and D165.

Belongs to the class I-like SAM-binding methyltransferase superfamily. TrmB family.

It carries out the reaction guanosine(46) in tRNA + S-adenosyl-L-methionine = N(7)-methylguanosine(46) in tRNA + S-adenosyl-L-homocysteine. It participates in tRNA modification; N(7)-methylguanine-tRNA biosynthesis. Catalyzes the formation of N(7)-methylguanine at position 46 (m7G46) in tRNA. The protein is tRNA (guanine-N(7)-)-methyltransferase of Chlamydia pneumoniae (Chlamydophila pneumoniae).